We begin with the raw amino-acid sequence, 598 residues long: Arylsulfate sulfotransferase AssT (598 aa).

Positions 1-27 (MFHPYRKTLLSGTVALALGLFATGAIA) are cleaved as a signal peptide. 4-methylumbelliferone is bound by residues histidine 279 and histidine 383. A disulfide bond links cysteine 445 and cysteine 451. Histidine 463 is a binding site for 4-methylumbelliferone. Histidine 463 functions as the Nucleophile; sulfurylated histidine covalent intermediate in the catalytic mechanism.

The protein belongs to the aryl sulfotransferase family. As to quaternary structure, monomer.

It localises to the periplasm. The enzyme catalyses an aryl sulfate + a phenol = an aryl sulfate + a phenol. It catalyses the reaction 4-methylumbelliferone sulfate + phenol = phenyl sulfate + 4-methylumbelliferone. The catalysed reaction is 2-naphthyl sulfate + phenol = phenyl sulfate + 2-naphthol. Functionally, catalyzes the transfer of a sulfate group from a phenyl sulfate ester to other phenolic compounds. Is able to use several substrate donors and acceptors in vitro: using phenol as an acceptor substrate, 4-methylumbelliferyl sulfate is the best donor substrate, followed by beta-naphthyl sulfate, p-nitrophenyl sulfate (PNS), and alpha-naphthyl sulfate; using PNS as a donor substrate, alpha-naphthol is the best acceptor substrate, followed by phenol, resorcinol, p-acetaminophen, tyramine, and tyrosine. Cannot use 3'-phosphoadenosine-5'-phophosulfate (PAPS), the donor substrate of mammalian sulfotransferase. May be a detoxifying enzyme, converting toxic phenolic compounds into non-toxic materials. The sequence is that of Arylsulfate sulfotransferase AssT from Lelliottia amnigena (Enterobacter amnigenus).